The sequence spans 418 residues: Histidine--tRNA ligase (418 aa).

Belongs to the class-II aminoacyl-tRNA synthetase family. Homodimer.

It localises to the cytoplasm. It carries out the reaction tRNA(His) + L-histidine + ATP = L-histidyl-tRNA(His) + AMP + diphosphate + H(+). In Dehalococcoides mccartyi (strain ATCC BAA-2266 / KCTC 15142 / 195) (Dehalococcoides ethenogenes (strain 195)), this protein is Histidine--tRNA ligase.